The following is a 130-amino-acid chain: MTTESLETLVEQLSGLTVLELSQLKKMLEEKWDVTAAAPVVAVAGAAAAGDAPASAEPTEFAVILEDVPADKKIGVLKVVREVTGLALKEAKEMTEGLPKTVKEKTSKSDAEDTVKKLQEAGAKAVAKGL.

Belongs to the bacterial ribosomal protein bL12 family. In terms of assembly, homodimer. Part of the ribosomal stalk of the 50S ribosomal subunit. Forms a multimeric L10(L12)X complex, where L10 forms an elongated spine to which 2 to 4 L12 dimers bind in a sequential fashion. Binds GTP-bound translation factors.

Forms part of the ribosomal stalk which helps the ribosome interact with GTP-bound translation factors. Is thus essential for accurate translation. This is Large ribosomal subunit protein bL12 from Chlamydia muridarum (strain MoPn / Nigg).